The sequence spans 181 residues: Large ribosomal subunit protein uL6m (181 aa).

This sequence belongs to the universal ribosomal protein uL6 family.

The protein localises to the mitochondrion. The polypeptide is Large ribosomal subunit protein uL6m (RPL6) (Acanthamoeba castellanii (Amoeba)).